Here is a 389-residue protein sequence, read N- to C-terminus: D-alanyl-D-alanine carboxypeptidase DacF (389 aa).

Positions 1-23 are cleaved as a signal peptide; sequence MKRLLSTLLIGIMLLTFAPSAFA. S64 acts as the Acyl-ester intermediate in catalysis. The Proton acceptor role is filled by K67. S124 is an active-site residue. K230 is a binding site for substrate.

It belongs to the peptidase S11 family.

It localises to the secreted. It catalyses the reaction Preferential cleavage: (Ac)2-L-Lys-D-Ala-|-D-Ala. Also transpeptidation of peptidyl-alanyl moieties that are N-acyl substituents of D-alanine.. It functions in the pathway cell wall biogenesis; peptidoglycan biosynthesis. Removes C-terminal D-alanyl residues from sugar-peptide cell wall precursors. The sequence is that of D-alanyl-D-alanine carboxypeptidase DacF (dacF) from Bacillus subtilis (strain 168).